A 207-amino-acid chain; its full sequence is LexA repressor (207 aa).

The segment at residues 28 to 48 (VREIGEAVGLASSSTVHGHLA) is a DNA-binding region (H-T-H motif). Active-site for autocatalytic cleavage activity residues include Ser-129 and Lys-167.

Belongs to the peptidase S24 family. Homodimer.

The catalysed reaction is Hydrolysis of Ala-|-Gly bond in repressor LexA.. Its function is as follows. Represses a number of genes involved in the response to DNA damage (SOS response), including recA and lexA. In the presence of single-stranded DNA, RecA interacts with LexA causing an autocatalytic cleavage which disrupts the DNA-binding part of LexA, leading to derepression of the SOS regulon and eventually DNA repair. This chain is LexA repressor, found in Geobacillus thermodenitrificans (strain NG80-2).